Reading from the N-terminus, the 562-residue chain is Dihydroxy-acid dehydratase (562 aa).

Asp80 provides a ligand contact to Mg(2+). Cys121 is a [2Fe-2S] cluster binding site. Asp122 and Lys123 together coordinate Mg(2+). The residue at position 123 (Lys123) is an N6-carboxylysine. A [2Fe-2S] cluster-binding site is contributed by Cys194. Glu446 contributes to the Mg(2+) binding site. Residue Ser472 is the Proton acceptor of the active site.

This sequence belongs to the IlvD/Edd family. As to quaternary structure, homodimer. [2Fe-2S] cluster serves as cofactor. Mg(2+) is required as a cofactor.

The enzyme catalyses (2R)-2,3-dihydroxy-3-methylbutanoate = 3-methyl-2-oxobutanoate + H2O. The catalysed reaction is (2R,3R)-2,3-dihydroxy-3-methylpentanoate = (S)-3-methyl-2-oxopentanoate + H2O. It functions in the pathway amino-acid biosynthesis; L-isoleucine biosynthesis; L-isoleucine from 2-oxobutanoate: step 3/4. The protein operates within amino-acid biosynthesis; L-valine biosynthesis; L-valine from pyruvate: step 3/4. Its function is as follows. Functions in the biosynthesis of branched-chain amino acids. Catalyzes the dehydration of (2R,3R)-2,3-dihydroxy-3-methylpentanoate (2,3-dihydroxy-3-methylvalerate) into 2-oxo-3-methylpentanoate (2-oxo-3-methylvalerate) and of (2R)-2,3-dihydroxy-3-methylbutanoate (2,3-dihydroxyisovalerate) into 2-oxo-3-methylbutanoate (2-oxoisovalerate), the penultimate precursor to L-isoleucine and L-valine, respectively. The polypeptide is Dihydroxy-acid dehydratase (Staphylococcus aureus (strain MRSA252)).